Reading from the N-terminus, the 341-residue chain is MPGLLLDTLNRTRSDRVPLWLMRQAGRYLPEYRELRARKGGFLELVYDSEAAREVTLQPIRRFGFDGAILFSDILIVPHALGQKLEFLAGEGPHLSPRLADAELEALSTVPERLDAIYETVRQVRAALDPETTLLGFAGSPWTVATYMVAGEGSRDQQAARSMAYTDPGKLQAIVDAIIDLTVEYLVGQIDAGAEAVQLFDSWAGSLAPDQFERWVIAPNAAIVRRLKEARPDALVIGFPKGAGAKLSAYAAGTGVDAIALDETIDPAWAHTVLPDGMPVQGNLDPLQILAGGDAMVERTKAILGALADRPHVFNLGHGIDKHTPIGHVERLVDTVRNWQR.

Substrate contacts are provided by residues Arg23–Arg27, Asp73, Tyr147, Ser202, and His318.

It belongs to the uroporphyrinogen decarboxylase family. Homodimer.

It is found in the cytoplasm. The enzyme catalyses uroporphyrinogen III + 4 H(+) = coproporphyrinogen III + 4 CO2. The protein operates within porphyrin-containing compound metabolism; protoporphyrin-IX biosynthesis; coproporphyrinogen-III from 5-aminolevulinate: step 4/4. Its function is as follows. Catalyzes the decarboxylation of four acetate groups of uroporphyrinogen-III to yield coproporphyrinogen-III. The sequence is that of Uroporphyrinogen decarboxylase from Erythrobacter litoralis (strain HTCC2594).